Here is a 159-residue protein sequence, read N- to C-terminus: Phosphopantetheine adenylyltransferase (159 aa).

Thr-10 serves as a coordination point for substrate. ATP is bound by residues 10–11 (TF) and His-18. Substrate-binding residues include Lys-42, Met-74, and Arg-88. Residues 89-91 (GLR), Glu-99, and 124-130 (WSFISSS) each bind ATP.

Belongs to the bacterial CoaD family. As to quaternary structure, homohexamer. Mg(2+) is required as a cofactor.

The protein resides in the cytoplasm. The catalysed reaction is (R)-4'-phosphopantetheine + ATP + H(+) = 3'-dephospho-CoA + diphosphate. The protein operates within cofactor biosynthesis; coenzyme A biosynthesis; CoA from (R)-pantothenate: step 4/5. Reversibly transfers an adenylyl group from ATP to 4'-phosphopantetheine, yielding dephospho-CoA (dPCoA) and pyrophosphate. The sequence is that of Phosphopantetheine adenylyltransferase from Escherichia coli (strain SMS-3-5 / SECEC).